Reading from the N-terminus, the 197-residue chain is Isochorismatase domain-containing protein 2 (197 aa).

It belongs to the isochorismatase family.

This Danio rerio (Zebrafish) protein is Isochorismatase domain-containing protein 2 (isoc2).